The following is a 462-amino-acid chain: Cysteine--tRNA ligase (462 aa).

Cys30 lines the Zn(2+) pocket. Positions 32 to 42 (MTVYDYCHVGH) match the 'HIGH' region motif. Positions 214, 239, and 243 each coordinate Zn(2+). The 'KMSKS' region motif lies at 271–275 (KMSKS). Residue Lys274 coordinates ATP.

The protein belongs to the class-I aminoacyl-tRNA synthetase family. In terms of assembly, monomer. Requires Zn(2+) as cofactor.

The protein localises to the cytoplasm. It catalyses the reaction tRNA(Cys) + L-cysteine + ATP = L-cysteinyl-tRNA(Cys) + AMP + diphosphate. The protein is Cysteine--tRNA ligase of Cupriavidus pinatubonensis (strain JMP 134 / LMG 1197) (Cupriavidus necator (strain JMP 134)).